Here is a 475-residue protein sequence, read N- to C-terminus: Crocetin glucosyltransferase 3 (475 aa).

The active-site Proton acceptor is H16. H16 serves as a coordination point for an anthocyanidin. Residue D123 is the Charge relay of the active site. T144, A354, Q356, H371, W374, N375, S376, and E379 together coordinate UDP-alpha-D-glucose. A394 provides a ligand contact to an anthocyanidin. Residues E395 and Q396 each coordinate UDP-alpha-D-glucose.

It belongs to the UDP-glycosyltransferase family. In terms of tissue distribution, mainly expressed in stamens.

The enzyme catalyses crocetin + UDP-alpha-D-glucose = beta-D-glucosyl crocetin + UDP. It carries out the reaction beta-D-glucosyl crocetin + UDP-alpha-D-glucose = bis(beta-D-glucosyl) crocetin + UDP. The catalysed reaction is beta-D-gentiobiosyl crocetin + UDP-alpha-D-glucose = beta-D-gentiobiosyl beta-D-glucosyl crocetin + UDP. Crocetin glucosyltransferase involved in the synthesis of crocin, one of the apocarotenoids responsible for the color and bitter taste of saffron. The sequence is that of Crocetin glucosyltransferase 3 (GLT3) from Crocus sativus (Saffron).